The chain runs to 140 residues: Small ribosomal subunit protein uS9 (140 aa).

Belongs to the universal ribosomal protein uS9 family.

This is Small ribosomal subunit protein uS9 from Desulfurococcus amylolyticus (strain DSM 18924 / JCM 16383 / VKM B-2413 / 1221n) (Desulfurococcus kamchatkensis).